The chain runs to 274 residues: Insulin-like growth factor-binding protein-like 1 (274 aa).

A signal peptide spans 1–21 (MPRSPGLFLLLLVLQPLPALG). Positions 30-105 (RNPECGPCRP…PEGTGLCVCA (76 aa)) constitute an IGFBP N-terminal domain. 7 cysteine pairs are disulfide-bonded: Cys-34/Cys-59, Cys-37/Cys-61, Cys-42/Cys-62, Cys-48/Cys-65, Cys-73/Cys-87, Cys-81/Cys-102, and Cys-111/Cys-147. One can recognise a Kazal-like domain in the interval 91–149 (AAGAAPEGTGLCVCAQRGSVCGSDGRSYPSVCALRLRARQAPRALPGHLHKARDGPCEF). The region spanning 151 to 255 (PVVITPPQSV…GEAQSHGTVT (105 aa)) is the Ig-like C2-type domain. Asn-162 carries N-linked (GlcNAc...) asparagine glycosylation. Cys-172 and Cys-239 are oxidised to a cystine.

The protein localises to the secreted. Functionally, IGF-binding proteins prolong the half-life of IGFs and have been shown to either inhibit or stimulate the growth promoting effects of the IGFs in cell culture. They alter the interaction of IGFs with their cell surface receptors. The sequence is that of Insulin-like growth factor-binding protein-like 1 (IGFBPL1) from Bos taurus (Bovine).